A 210-amino-acid chain; its full sequence is Small heat shock protein hspG6 (210 aa).

Residues 34-210 form the sHSP domain; it reads KTIIDKLPPM…YSNTIKININ (177 aa). Residues 93–151 are disordered; sequence VIEKSTSSSTLDSKEDEPSIEEFEDDIKPKSKSDNTTVSTTTTATTKENKEDENKTKST. Over residues 126–138 the composition is skewed to low complexity; sequence DNTTVSTTTTATT. Over residues 139–151 the composition is skewed to basic and acidic residues; that stretch reads KENKEDENKTKST.

The protein belongs to the small heat shock protein (HSP20) family.

In Dictyostelium discoideum (Social amoeba), this protein is Small heat shock protein hspG6 (hspG6).